The sequence spans 413 residues: Multidrug resistance protein MdtA (413 aa).

An N-terminal signal peptide occupies residues 1 to 20; sequence MKGSNTFRWAIAIGVVVAAA. 2 disordered regions span residues 31–57 and 391–413; these read SPTAAPGVAAQAPHTASAGRRGMRDGP and EPQTTVADEKSPSRHEGQKGARA. The span at 397-413 shows a compositional bias: basic and acidic residues; it reads ADEKSPSRHEGQKGARA.

It belongs to the membrane fusion protein (MFP) (TC 8.A.1) family. As to quaternary structure, part of a tripartite efflux system composed of MdtA, MdtB and MdtC.

It is found in the cell inner membrane. The protein is Multidrug resistance protein MdtA of Salmonella typhimurium (strain LT2 / SGSC1412 / ATCC 700720).